The following is a 536-amino-acid chain: L-ornithine N(5)-monooxygenase SIDA (536 aa).

The segment at 1 to 25 (MSPHRETTGDESTTTTVPQNGTNGA) is disordered. FAD-binding positions include 115–123 (EKQTRFAWH) and Gln-134. Lys-139 contributes to the L-ornithine binding site. Residue Val-200 coordinates FAD. Residue Arg-310 coordinates NADP(+). L-ornithine contacts are provided by residues 324 to 327 (NSIF) and Asn-354. 515-517 (TLL) contributes to the FAD binding site. Ser-518 contributes to the L-ornithine binding site.

The protein belongs to the lysine N(6)-hydroxylase/L-ornithine N(5)-oxygenase family. Homotetramer. It depends on FAD as a cofactor.

The catalysed reaction is L-ornithine + NADH + O2 = N(5)-hydroxy-L-ornithine + NAD(+) + H2O. It catalyses the reaction L-ornithine + NADPH + O2 = N(5)-hydroxy-L-ornithine + NADP(+) + H2O. It functions in the pathway siderophore biosynthesis. L-ornithine N(5)-monooxygenase; part of the gene cluster that mediates the biosynthesis of at least 11 siderophores, including beauverichelin A, dimerumic acid (DA), Na-dimethyl coprogen (NADC), eleutherazine B, ferricrocin (FC), fusarinine A, fusarinine C (FsC), metachelin A, mevalonolactone, rhodotorulic acid (RA) and tenellin. This cocktail of siderophores for iron metabolism is essential for virulence, and more specifically for the fungal virulence in penetrating through the host cuticle. Siderophore synthesis is also involved in conidial germination under iron-deficient conditions. SIDA initiates the biosynthesis of these siderophores with the enzymatic hydroxylation of ornithine. SIDA is indispensable for the production of most siderophores including fusarinine C and ferricrocin but not mevalonolactone and eleutherazine B. However, SIDA mediates the metabolic interplay between synthesis of mevalonolactone and eleutherazine B and other siderophores. The protein is L-ornithine N(5)-monooxygenase SIDA of Beauveria bassiana (strain ARSEF 2860) (White muscardine disease fungus).